Consider the following 504-residue polypeptide: DnaJ homolog subfamily C member 3 (504 aa).

The first 31 residues, Met1–Cys31, serve as a signal peptide directing secretion. 9 TPR repeats span residues Val37–Asn70, Ile72–Phe104, Thr105–Glu138, Met154–Asp187, Ala188–Asn221, Thr222–His255, Leu268–Val301, Val306–Asn339, and Val340–Asp373. A disulfide bridge links Cys248 with Cys258. At Ser274 the chain carries Phosphoserine. Cys313 and Cys329 form a disulfide bridge. The segment at Gln375–Arg393 is flexible linker. Positions Asp394 to Glu462 constitute a J domain. A disordered region spans residues Asp451–Ser481.

Interacts with EIF2AK4/GCN2; this interaction occurs under endoplasmic reticulum (ER) stress, hypothermic and amino acid starving stress conditions and inhibits EIF2AK4/GCN2 kinase activity. Interacts with EIF2AK3. Interacts with EIF2AK2. Forms a trimeric complex with DNAJB1 and HSPA8. Interacts with THAP12. As to expression, widely expressed, with high level in the liver.

It localises to the endoplasmic reticulum. Functionally, involved in the unfolded protein response (UPR) during endoplasmic reticulum (ER) stress. Acts as a negative regulator of the EIF2AK4/GCN2 kinase activity by preventing the phosphorylation of eIF-2-alpha at 'Ser-52' and hence attenuating general protein synthesis under ER stress, hypothermic and amino acid starving stress conditions. Co-chaperone of HSPA8/HSC70, it stimulates its ATPase activity. May inhibit both the autophosphorylation of EIF2AK2/PKR and the ability of EIF2AK2 to catalyze phosphorylation of the EIF2A. May inhibit EIF2AK3/PERK activity. The polypeptide is DnaJ homolog subfamily C member 3 (Dnajc3) (Mus musculus (Mouse)).